Consider the following 453-residue polypeptide: UDP-N-acetylmuramate--L-alanyl-gamma-D-glutamyl-meso-2,6-diaminoheptandioate ligase (453 aa).

111 to 117 (GTHGKTT) provides a ligand contact to ATP.

The protein belongs to the MurCDEF family. Mpl subfamily. It depends on Mg(2+) as a cofactor.

The catalysed reaction is UDP-N-acetyl-alpha-D-muramate + L-alanyl-gamma-D-glutamyl-meso-2,6-diaminopimelate + ATP = UDP-N-acetyl-alpha-D-muramoyl-L-alanyl-gamma-D-glutamyl-meso-2,6-diaminopimelate + ADP + phosphate + H(+). The protein operates within cell wall biogenesis; peptidoglycan recycling. In terms of biological role, reutilizes the intact tripeptide L-alanyl-gamma-D-glutamyl-meso-diaminopimelate by linking it to UDP-N-acetylmuramate. This is UDP-N-acetylmuramate--L-alanyl-gamma-D-glutamyl-meso-2,6-diaminoheptandioate ligase from Haemophilus influenzae (strain ATCC 51907 / DSM 11121 / KW20 / Rd).